The following is a 260-amino-acid chain: Deoxycytidine kinase (260 aa).

2 positions are modified to phosphoserine; by CK1: S11 and S15. Residue G28–T36 participates in ATP binding. E53 provides a ligand contact to substrate. Phosphothreonine; by CK1 is present on T72. Phosphoserine is present on S74. Residues Y86 and Q97 each coordinate substrate. Residue E127 is the Proton acceptor of the active site. Substrate contacts are provided by R128 and D133. Position 188-192 (R188–R192) interacts with ATP. Residue E197 participates in substrate binding. Residue E240–F242 coordinates ATP.

The protein belongs to the DCK/DGK family. In terms of assembly, homodimer. In terms of processing, phosphorylated and activated in vitro upon phosphorylation at Ser-74 by CSNK1D/CK1.

It localises to the nucleus. It carries out the reaction 2'-deoxycytidine + a ribonucleoside 5'-triphosphate = dCMP + a ribonucleoside 5'-diphosphate + H(+). The catalysed reaction is 2'-deoxyadenosine + ATP = dAMP + ADP + H(+). It catalyses the reaction 2'-deoxyguanosine + ATP = dGMP + ADP + H(+). Functionally, phosphorylates the deoxyribonucleosides deoxycytidine, deoxyguanosine and deoxyadenosine. Has broad substrate specificity, and does not display selectivity based on the chirality of the substrate. It is also an essential enzyme for the phosphorylation of numerous nucleoside analogs widely employed as antiviral and chemotherapeutic agents. In Homo sapiens (Human), this protein is Deoxycytidine kinase (DCK).